The chain runs to 309 residues: Tagatose-6-phosphate kinase (309 aa).

Belongs to the carbohydrate kinase PfkB family. LacC subfamily.

The catalysed reaction is D-tagatofuranose 6-phosphate + ATP = D-tagatofuranose 1,6-bisphosphate + ADP + H(+). It participates in carbohydrate metabolism; D-tagatose 6-phosphate degradation; D-glyceraldehyde 3-phosphate and glycerone phosphate from D-tagatose 6-phosphate: step 1/2. The sequence is that of Tagatose-6-phosphate kinase from Streptococcus pneumoniae (strain Hungary19A-6).